The primary structure comprises 895 residues: MTNKANLPSNESIMNTLAPEQKKSKANAQPFSVFVPAAYEDPHVYRQVEELLDQVCQVVSPVWPLKDWIAVNPYAGLSERSFHESRDYLRVFSKCELLPSMDHFSAHYQSGSFAESHIEAALLENSPGKDLSQKKADVLKALQTRLHTGDASKQTMPEKSSLPRIATIADRLSAHGEVDWTEIVKDEIGKHCSAHYDEGQSTWASPWRNLPLYQAWRNKAKIDRGIEILGLTGFRHFVDELPHTVEATIVHLLQRLNIPRALWETFLLAHAFSLPGWSGWTKYQGLQTDPTGTGRMQFDDFRGLLAMSLAYDVAISEAFLFEVNWSSVLDHQSLSLMDSDNDCKSDRKILLRAMEIAYRDDLLAKLPVRELTTDHVADEDFEEPTNLATKPAVQMAFCIDVRSERFRRHLEQVDASVDTLGIAGFFGLPFEYVPLGQSSGDTHAPVLLSPKFALREKSSPCVGDCATSRNDTAEKQVSVRNGKKLWKRLQTSAVGCFSFVETIGLFSGFDLATRLMSPKFRNSLRIKHPSKLHDVEATPLDLDHLVEQGIDLDQQTDLVEGLLNSMGLSDDFAPLVVLCGHGSQTDNNAMAAGLDCGACGGHSGAPNARLAAILLNDRRIQKRLSDRGIEIPAETHVIAAWHNTTTDQIEWLDLDAVPASHQSRIVELQNVADAASHLTREERLPLLNESCTDSLISRASDWSQTRPEWGLAGNASMLIGPRELTRGRSLDGRVFLHSYNQTTDPKGAVLESILTAPMVVAHWINMQYYASTVDPTLFGSGCKTIHNVVGQFGVLSGNGGDLQAGLPNQSLGCGLKMQHLPLRLQTVVVASRESIDRVIAKHANIRNLLQNGWVHMVAIDSGQKYRYHSDGSWVQLRTENTSRAESEWQVVGGTC.

Zn(2+) is bound by residues Cys398, Asp400, His581, and Cys596.

It belongs to the inorganic carbon transporter (TC 9.A.2) DabA family. As to quaternary structure, forms a complex with DabB. Zn(2+) serves as cofactor.

The protein localises to the cell inner membrane. In terms of biological role, part of an energy-coupled inorganic carbon pump. In Rhodopirellula baltica (strain DSM 10527 / NCIMB 13988 / SH1), this protein is Probable inorganic carbon transporter subunit DabA 1.